A 242-amino-acid polypeptide reads, in one-letter code: DNA repair protein RecO (242 aa).

The protein belongs to the RecO family. Monomer.

Involved in DNA repair and RecF pathway recombination. This is DNA repair protein RecO from Salmonella gallinarum (strain 287/91 / NCTC 13346).